Here is a 214-residue protein sequence, read N- to C-terminus: Zinc finger protein 11 (214 aa).

The interval 1 to 27 is disordered; sequence MKRTHLASFSNRDKTQEEEGEDGNGDN. The C2H2-type zinc finger occupies 49–71; the sequence is YTCSFCRREFRSAQALGGHMNVH. Positions 72–79 match the Nuclear localization signal motif; the sequence is RRDRAKLR. The tract at residues 89–130 is disordered; the sequence is HHHTPIANPNPNFSSSSSSSTTTAHLEPSLTNQRSKTTPFPS. Positions 102–111 are enriched in low complexity; it reads SSSSSSSTTT. The span at 117–128 shows a compositional bias: polar residues; the sequence is SLTNQRSKTTPF.

As to expression, expressed in roots, stems, axillary buds and flowers.

The protein resides in the nucleus. Probable transcription factor that may regulate cell division and growth. The chain is Zinc finger protein 11 from Arabidopsis thaliana (Mouse-ear cress).